Here is a 186-residue protein sequence, read N- to C-terminus: Ribosome-recycling factor (186 aa).

The protein belongs to the RRF family.

The protein resides in the cytoplasm. Its function is as follows. Responsible for the release of ribosomes from messenger RNA at the termination of protein biosynthesis. May increase the efficiency of translation by recycling ribosomes from one round of translation to another. The chain is Ribosome-recycling factor from Polaromonas naphthalenivorans (strain CJ2).